A 371-amino-acid chain; its full sequence is NADH-ubiquinone oxidoreductase chain 1 (371 aa).

Transmembrane regions (helical) follow at residues 7–27, 44–64, 77–97, 109–129, 153–173, 180–200, 226–246, 263–283, 302–322, and 338–358; these read IISI…VAYV, PNAV…KLLL, LFFL…AVIP, LGIL…LLAG, LVLS…NLGV, AVLF…GSIA, AVVF…MCIL, VFNI…NWMV, GWLY…IFIL, and FCWT…PCIL.

Belongs to the complex I subunit 1 family.

Its subcellular location is the mitochondrion inner membrane. It catalyses the reaction a ubiquinone + NADH + 5 H(+)(in) = a ubiquinol + NAD(+) + 4 H(+)(out). In terms of biological role, core subunit of the mitochondrial membrane respiratory chain NADH dehydrogenase (Complex I) that is believed to belong to the minimal assembly required for catalysis. Complex I functions in the transfer of electrons from NADH to the respiratory chain. The immediate electron acceptor for the enzyme is believed to be ubiquinone. The sequence is that of NADH-ubiquinone oxidoreductase chain 1 (ndh-1) from Neurospora crassa (strain ATCC 24698 / 74-OR23-1A / CBS 708.71 / DSM 1257 / FGSC 987).